A 421-amino-acid chain; its full sequence is 2',3'-cyclic-nucleotide 3'-phosphodiesterase (421 aa).

Ser-6 and Ser-9 each carry phosphoserine. The residue at position 110 (Tyr-110) is a Phosphotyrosine. Ser-170 bears the Phosphoserine mark. His-251 serves as the catalytic Proton acceptor. Thr-253 provides a ligand contact to substrate. The Proton donor role is filled by His-330. Residue Thr-332 participates in substrate binding. The residue at position 359 (Ser-359) is a Phosphoserine. Cys-418 carries the post-translational modification Cysteine methyl ester. Cys-418 carries the S-farnesyl cysteine lipid modification. A propeptide spans 419–421 (removed in mature form); the sequence is TII.

It belongs to the 2H phosphoesterase superfamily. CNPase family. In terms of assembly, exists as monomers and homodimers.

Its subcellular location is the membrane. The protein resides in the melanosome. The catalysed reaction is a nucleoside 2',3'-cyclic phosphate + H2O = a nucleoside 2'-phosphate + H(+). Functionally, catalyzes the formation of 2'-nucleotide products from 2',3'-cyclic substrates. May participate in RNA metabolism in the myelinating cell, CNP is the third most abundant protein in central nervous system myelin. The chain is 2',3'-cyclic-nucleotide 3'-phosphodiesterase from Homo sapiens (Human).